The sequence spans 122 residues: Atrial gland peptide B (122 aa).

A signal peptide spans 1-21; the sequence is MKANTMFIILCLTLSTLCVSS. Positions 22-34 are excised as a propeptide; it reads QFTSVLGKIFVTN. At isoleucine 69 the chain carries Isoleucine amide. The propeptide occupies 73–122; the sequence is AAGGMEQSEGQNPETKSHSWRERSVLTPSLLSLGESLESGISKRISINQD. The segment at 74-95 is disordered; it reads AGGMEQSEGQNPETKSHSWRER.

Belongs to the molluscan ELH family.

It localises to the secreted. In terms of biological role, the atrial gland peptide A and peptide B precursors are the source of the 2 peptides that, upon release from this reproductive system gland, initiate the egg-laying process by exciting the bag cell neurons. These neurons, clustered in neural connectives near the abdominal ganglion, in turn release other peptides that act directly on the ganglion and also, via the circulating hemolymph, on many other organs to control the physiological processes of egg-laying. One of these other peptides is the egg-laying hormone. This chain is Atrial gland peptide B, found in Aplysia californica (California sea hare).